The sequence spans 124 residues: Large ribosomal subunit protein bL12 (124 aa).

This sequence belongs to the bacterial ribosomal protein bL12 family. Homodimer. Part of the ribosomal stalk of the 50S ribosomal subunit. Forms a multimeric L10(L12)X complex, where L10 forms an elongated spine to which 2 to 4 L12 dimers bind in a sequential fashion. Binds GTP-bound translation factors.

In terms of biological role, forms part of the ribosomal stalk which helps the ribosome interact with GTP-bound translation factors. Is thus essential for accurate translation. The polypeptide is Large ribosomal subunit protein bL12 (Hamiltonella defensa subsp. Acyrthosiphon pisum (strain 5AT)).